Consider the following 298-residue polypeptide: Ethanolamine ammonia-lyase small subunit (298 aa).

Adenosylcob(III)alamin is bound by residues Val210, Glu231, and Cys261.

The protein belongs to the EutC family. The basic unit is a heterodimer which dimerizes to form tetramers. The heterotetramers trimerize; 6 large subunits form a core ring with 6 small subunits projecting outwards. It depends on adenosylcob(III)alamin as a cofactor.

It is found in the bacterial microcompartment. The enzyme catalyses ethanolamine = acetaldehyde + NH4(+). The protein operates within amine and polyamine degradation; ethanolamine degradation. Functionally, catalyzes the deamination of various vicinal amino-alcohols to oxo compounds. Allows this organism to utilize ethanolamine as the sole source of nitrogen and carbon in the presence of external vitamin B12. The polypeptide is Ethanolamine ammonia-lyase small subunit (Salmonella typhi).